A 113-amino-acid polypeptide reads, in one-letter code: UPF0122 protein LSEI_1603 (113 aa).

Belongs to the UPF0122 family.

Its function is as follows. Might take part in the signal recognition particle (SRP) pathway. This is inferred from the conservation of its genetic proximity to ftsY/ffh. May be a regulatory protein. This is UPF0122 protein LSEI_1603 from Lacticaseibacillus paracasei (strain ATCC 334 / BCRC 17002 / CCUG 31169 / CIP 107868 / KCTC 3260 / NRRL B-441) (Lactobacillus paracasei).